A 160-amino-acid chain; its full sequence is Putative 4-hydroxy-4-methyl-2-oxoglutarate aldolase (160 aa).

Substrate contacts are provided by residues Gly-76–Leu-79 and Arg-98. Asp-99 lines the a divalent metal cation pocket.

Belongs to the class II aldolase/RraA-like family. In terms of assembly, homotrimer. A divalent metal cation is required as a cofactor.

The catalysed reaction is 4-hydroxy-4-methyl-2-oxoglutarate = 2 pyruvate. The enzyme catalyses oxaloacetate + H(+) = pyruvate + CO2. Functionally, catalyzes the aldol cleavage of 4-hydroxy-4-methyl-2-oxoglutarate (HMG) into 2 molecules of pyruvate. Also contains a secondary oxaloacetate (OAA) decarboxylase activity due to the common pyruvate enolate transition state formed following C-C bond cleavage in the retro-aldol and decarboxylation reactions. The polypeptide is Putative 4-hydroxy-4-methyl-2-oxoglutarate aldolase (Deinococcus radiodurans (strain ATCC 13939 / DSM 20539 / JCM 16871 / CCUG 27074 / LMG 4051 / NBRC 15346 / NCIMB 9279 / VKM B-1422 / R1)).